A 355-amino-acid polypeptide reads, in one-letter code: MLGIETTCDETAAAVVARDSDGKGRILSNVVRSQTDEHALYGGVVPEIAARAHVDMLDHLIDAAMREAGIDYADLNGVAAAAGPGLIGGVIVGLTTAKAIALVHDTPLIAVNHLEAHALTPRLTDAIDFPYCLFLASGGHTQIVAVAGVGDYVRLGTTVDDAMGEAFDKVAKMLGLPYPGGPQVEEAAQRGDAARFAFPRPMLGRSDANFSLSGLKTAVRNEIGRIAHVSAQDIADLCASFQAAVLESTADRLRVGLDLFKQRFGAPTALVAAGGVAANQAIRAALDDVAQQAGTRLIMPPPALCTDNGAMIAWAGLERLALGMIDGMDAAPRARWLLDANASVPGKFANTRAGF.

2 residues coordinate Fe cation: His-113 and His-117. Residues Leu-135–Gly-139, Asp-168, Gly-181, and Asn-279 each bind substrate. Position 307 (Asp-307) interacts with Fe cation.

Belongs to the KAE1 / TsaD family. It depends on Fe(2+) as a cofactor.

The protein localises to the cytoplasm. The catalysed reaction is L-threonylcarbamoyladenylate + adenosine(37) in tRNA = N(6)-L-threonylcarbamoyladenosine(37) in tRNA + AMP + H(+). Its function is as follows. Required for the formation of a threonylcarbamoyl group on adenosine at position 37 (t(6)A37) in tRNAs that read codons beginning with adenine. Is involved in the transfer of the threonylcarbamoyl moiety of threonylcarbamoyl-AMP (TC-AMP) to the N6 group of A37, together with TsaE and TsaB. TsaD likely plays a direct catalytic role in this reaction. The protein is tRNA N6-adenosine threonylcarbamoyltransferase of Bradyrhizobium sp. (strain BTAi1 / ATCC BAA-1182).